Here is a 365-residue protein sequence, read N- to C-terminus: Peptide chain release factor 2 (365 aa).

Position 252 is an N5-methylglutamine (Gln-252).

The protein belongs to the prokaryotic/mitochondrial release factor family. In terms of processing, methylated by PrmC. Methylation increases the termination efficiency of RF2.

Its subcellular location is the cytoplasm. Peptide chain release factor 2 directs the termination of translation in response to the peptide chain termination codons UGA and UAA. The chain is Peptide chain release factor 2 from Shewanella woodyi (strain ATCC 51908 / MS32).